The chain runs to 414 residues: Esterase FrsA (414 aa).

The protein belongs to the FrsA family.

The enzyme catalyses a carboxylic ester + H2O = an alcohol + a carboxylate + H(+). Functionally, catalyzes the hydrolysis of esters. The chain is Esterase FrsA from Escherichia fergusonii (strain ATCC 35469 / DSM 13698 / CCUG 18766 / IAM 14443 / JCM 21226 / LMG 7866 / NBRC 102419 / NCTC 12128 / CDC 0568-73).